The sequence spans 944 residues: Translation initiation factor IF-2 (944 aa).

Low complexity predominate over residues 55-81 (LTGQAAAPAAAPSSAPRPGARSSAPKP). The interval 55–329 (LTGQAAAPAA…RTKRAEFELR (275 aa)) is disordered. Residues 82 to 92 (GGRPTPGPQPT) show a composition bias toward pro residues. Positions 93–107 (AAPEVEAPEASDVPV) are enriched in low complexity. The span at 123–135 (ASRKAAAEEKAQA) shows a compositional bias: basic and acidic residues. 2 stretches are compositionally biased toward low complexity: residues 136-153 (EKSAASATPDAPAAETPS) and 211-222 (GQRPAAGAAGPR). The span at 223 to 236 (PAAPRPGSPRPGAP) shows a compositional bias: pro residues. Low complexity predominate over residues 244–257 (GARPAGFGQRPAGA). Over residues 258–269 (GRPGGAPGGAGR) the composition is skewed to gly residues. Residues 270–283 (PGAPAAGGFQRPAG) show a composition bias toward low complexity. The span at 284–310 (GFAGRPGGGGRGRGPGGGTAGAFGRGG) shows a compositional bias: gly residues. Positions 311–322 (GKSKSRKSKRTK) are enriched in basic residues. One can recognise a tr-type G domain in the interval 437–611 (IRPPVVTVMG…LTADAGLDLR (175 aa)). The interval 446–453 (GHVDHGKT) is G1. 446–453 (GHVDHGKT) contributes to the GTP binding site. Positions 471 to 475 (GITQH) are G2. Positions 496–499 (DTPG) are G3. GTP contacts are provided by residues 496 to 500 (DTPGH) and 550 to 553 (NKVD). The tract at residues 550 to 553 (NKVD) is G4. A G5 region spans residues 586–588 (SAL).

This sequence belongs to the TRAFAC class translation factor GTPase superfamily. Classic translation factor GTPase family. IF-2 subfamily.

It localises to the cytoplasm. One of the essential components for the initiation of protein synthesis. Protects formylmethionyl-tRNA from spontaneous hydrolysis and promotes its binding to the 30S ribosomal subunits. Also involved in the hydrolysis of GTP during the formation of the 70S ribosomal complex. The protein is Translation initiation factor IF-2 of Clavibacter michiganensis subsp. michiganensis (strain NCPPB 382).